The following is a 147-amino-acid chain: Putative 2'-deoxynucleoside 5'-phosphate N-hydrolase 1 (147 aa).

Residues 10–16 (YFCGSIR), Tyr25, His42, Glu90, and 114–116 (SAM) each bind substrate.

Belongs to the 2'-deoxynucleoside 5'-phosphate N-hydrolase 1 family. In terms of assembly, monomer and homodimer.

Its subcellular location is the cytoplasm. It is found in the nucleus. The catalysed reaction is a pyrimidine 2'-deoxyribonucleoside 5'-phosphate + H2O = a pyrimidine nucleobase + 2-deoxy-D-ribose 5-phosphate. The enzyme catalyses a purine 2'-deoxyribonucleoside 5'-phosphate + H2O = a purine nucleobase + 2-deoxy-D-ribose 5-phosphate. Its function is as follows. Catalyzes the cleavage of the N-glycosidic bond of deoxyribonucleoside 5'-monophosphates to yield deoxyribose 5-phosphate and a purine or pyrimidine base. In Nematostella vectensis (Starlet sea anemone), this protein is Putative 2'-deoxynucleoside 5'-phosphate N-hydrolase 1.